We begin with the raw amino-acid sequence, 55 residues long: Large ribosomal subunit protein bL33B (55 aa).

Belongs to the bacterial ribosomal protein bL33 family.

This chain is Large ribosomal subunit protein bL33B, found in Rhodococcus jostii (strain RHA1).